We begin with the raw amino-acid sequence, 410 residues long: Arginine biosynthesis bifunctional protein ArgJ (410 aa).

The substrate site is built by threonine 158, lysine 184, threonine 195, glutamate 282, asparagine 405, and threonine 410. Catalysis depends on threonine 195, which acts as the Nucleophile.

Belongs to the ArgJ family. In terms of assembly, heterotetramer of two alpha and two beta chains.

Its subcellular location is the cytoplasm. The enzyme catalyses N(2)-acetyl-L-ornithine + L-glutamate = N-acetyl-L-glutamate + L-ornithine. The catalysed reaction is L-glutamate + acetyl-CoA = N-acetyl-L-glutamate + CoA + H(+). It functions in the pathway amino-acid biosynthesis; L-arginine biosynthesis; L-ornithine and N-acetyl-L-glutamate from L-glutamate and N(2)-acetyl-L-ornithine (cyclic): step 1/1. Its pathway is amino-acid biosynthesis; L-arginine biosynthesis; N(2)-acetyl-L-ornithine from L-glutamate: step 1/4. Functionally, catalyzes two activities which are involved in the cyclic version of arginine biosynthesis: the synthesis of N-acetylglutamate from glutamate and acetyl-CoA as the acetyl donor, and of ornithine by transacetylation between N(2)-acetylornithine and glutamate. The polypeptide is Arginine biosynthesis bifunctional protein ArgJ (Rhodopirellula baltica (strain DSM 10527 / NCIMB 13988 / SH1)).